The chain runs to 282 residues: NADPH-dependent 7-cyano-7-deazaguanine reductase (282 aa).

88–90 (IES) is a substrate binding site. 90–91 (SK) provides a ligand contact to NADPH. Cysteine 190 (thioimide intermediate) is an active-site residue. Aspartate 197 functions as the Proton donor in the catalytic mechanism. A substrate-binding site is contributed by 229–230 (HE). 258–259 (RG) contacts NADPH.

It belongs to the GTP cyclohydrolase I family. QueF type 2 subfamily. As to quaternary structure, homodimer.

The protein resides in the cytoplasm. It carries out the reaction 7-aminomethyl-7-carbaguanine + 2 NADP(+) = 7-cyano-7-deazaguanine + 2 NADPH + 3 H(+). Its pathway is tRNA modification; tRNA-queuosine biosynthesis. Its function is as follows. Catalyzes the NADPH-dependent reduction of 7-cyano-7-deazaguanine (preQ0) to 7-aminomethyl-7-deazaguanine (preQ1). This Escherichia coli O9:H4 (strain HS) protein is NADPH-dependent 7-cyano-7-deazaguanine reductase.